A 207-amino-acid polypeptide reads, in one-letter code: Outer-membrane lipoprotein LolB (207 aa).

An N-terminal signal peptide occupies residues 1-21 (MTLPDFRLIRLLPLASLVLTA). C22 carries N-palmitoyl cysteine lipidation. A lipid anchor (S-diacylglycerol cysteine) is attached at C22.

The protein belongs to the LolB family. As to quaternary structure, monomer.

It localises to the cell outer membrane. Plays a critical role in the incorporation of lipoproteins in the outer membrane after they are released by the LolA protein. In Citrobacter koseri (strain ATCC BAA-895 / CDC 4225-83 / SGSC4696), this protein is Outer-membrane lipoprotein LolB.